The primary structure comprises 168 residues: DOMON domain-containing protein CBG21753 (168 aa).

Residues 1–17 (MIKSMILVALILAFASA) form the signal peptide. Positions 25–143 (SGFQSYWRFA…CQKWRWIKSG (119 aa)) constitute a DOMON domain. N-linked (GlcNAc...) asparagine glycans are attached at residues asparagine 35 and asparagine 94. Positions 148–168 (GQLTRNSKSPKDKKVCPMECN) are disordered. The span at 156–168 (SPKDKKVCPMECN) shows a compositional bias: basic and acidic residues.

It localises to the secreted. This is DOMON domain-containing protein CBG21753 from Caenorhabditis briggsae.